The following is a 137-amino-acid chain: Large ribosomal subunit protein mL41 (137 aa).

The transit peptide at 1–13 directs the protein to the mitochondrion; that stretch reads MGVLAAAARCLVR.

This sequence belongs to the mitochondrion-specific ribosomal protein mL41 family. As to quaternary structure, component of the mitochondrial large ribosomal subunit (mt-LSU). Mature mammalian 55S mitochondrial ribosomes consist of a small (28S) and a large (39S) subunit. The 28S small subunit contains a 12S ribosomal RNA (12S mt-rRNA) and 30 different proteins. The 39S large subunit contains a 16S rRNA (16S mt-rRNA), a copy of mitochondrial valine transfer RNA (mt-tRNA(Val)), which plays an integral structural role, and 52 different proteins. Interacts with BCL2. In terms of tissue distribution, present in kidney, liver, thymus and testis, and at lower level in brain and spleen (at protein level).

It is found in the mitochondrion. In terms of biological role, component of the mitochondrial ribosome large subunit. Also involved in apoptosis and cell cycle. Enhances p53/TP53 stability, thereby contributing to p53/TP53-induced apoptosis in response to growth-inhibitory condition. Enhances p53/TP53 translocation to the mitochondria. Has the ability to arrest the cell cycle at the G1 phase, possibly by stabilizing the CDKN1A and CDKN1B (p27Kip1) proteins. The sequence is that of Large ribosomal subunit protein mL41 (MRPL41) from Homo sapiens (Human).